Here is a 167-residue protein sequence, read N- to C-terminus: UPF0598 protein CG30010 (167 aa).

This sequence belongs to the UPF0598 family.

The protein is UPF0598 protein CG30010 of Drosophila melanogaster (Fruit fly).